Here is a 238-residue protein sequence, read N- to C-terminus: Monocyte to macrophage differentiation factor (238 aa).

Residues 1 to 28 (MRFKNRFQRFMNHRAPANGRYKPTCYEH) lie on the Cytoplasmic side of the membrane. Residues 29-49 (AANCYTHAFLIVPAIVGSALL) form a helical membrane-spanning segment. The Lumenal segment spans residues 50–61 (HRLSDDCWEKIT). Residues 62–82 (AWIYGMGLCALFIVSTVFHIV) form a helical membrane-spanning segment. Topologically, residues 83–101 (SWKKSHLRTVEHCFHMCDR) are cytoplasmic. The helical transmembrane segment at 102-122 (MVIYFFIAASYAPWLNLRELG) threads the bilayer. The Lumenal segment spans residues 123 to 124 (PL). A helical membrane pass occupies residues 125–145 (ASHMRWFIWLMAAGGTIYVFL). The Cytoplasmic segment spans residues 146–151 (YHEKYK). A helical membrane pass occupies residues 152-172 (VVELFFYLTMGFSPALVVTSM). Residues 173–174 (NN) lie on the Lumenal side of the membrane. A helical membrane pass occupies residues 175–195 (TDGLQELACGGLIYCLGVVFF). At 196 to 198 (KSD) the chain is on the cytoplasmic side. The chain crosses the membrane as a helical span at residues 199-219 (GIIPFAHAIWHLFVATAAAVH). Residues 220 to 238 (YYAIWKYLYRSPTDFMRHL) are Lumenal-facing.

It belongs to the ADIPOR family. Exhibits relatively ubiquitous expression with preferential expression in mature (in vitro differentiated) macrophages.

The protein localises to the late endosome membrane. It is found in the lysosome membrane. In terms of biological role, involved in the dynamics of lysosomal membranes associated with microglial activation following brain lesion. The protein is Monocyte to macrophage differentiation factor of Homo sapiens (Human).